We begin with the raw amino-acid sequence, 481 residues long: Aspartyl/glutamyl-tRNA(Asn/Gln) amidotransferase subunit B (481 aa).

This sequence belongs to the GatB/GatE family. GatB subfamily. As to quaternary structure, heterotrimer of A, B and C subunits.

The catalysed reaction is L-glutamyl-tRNA(Gln) + L-glutamine + ATP + H2O = L-glutaminyl-tRNA(Gln) + L-glutamate + ADP + phosphate + H(+). It carries out the reaction L-aspartyl-tRNA(Asn) + L-glutamine + ATP + H2O = L-asparaginyl-tRNA(Asn) + L-glutamate + ADP + phosphate + 2 H(+). Its function is as follows. Allows the formation of correctly charged Asn-tRNA(Asn) or Gln-tRNA(Gln) through the transamidation of misacylated Asp-tRNA(Asn) or Glu-tRNA(Gln) in organisms which lack either or both of asparaginyl-tRNA or glutaminyl-tRNA synthetases. The reaction takes place in the presence of glutamine and ATP through an activated phospho-Asp-tRNA(Asn) or phospho-Glu-tRNA(Gln). The sequence is that of Aspartyl/glutamyl-tRNA(Asn/Gln) amidotransferase subunit B from Pseudomonas syringae pv. syringae (strain B728a).